Reading from the N-terminus, the 503-residue chain is Aspartyl/glutamyl-tRNA(Asn/Gln) amidotransferase subunit B (503 aa).

It belongs to the GatB/GatE family. GatB subfamily. As to quaternary structure, heterotrimer of A, B and C subunits.

The catalysed reaction is L-glutamyl-tRNA(Gln) + L-glutamine + ATP + H2O = L-glutaminyl-tRNA(Gln) + L-glutamate + ADP + phosphate + H(+). It carries out the reaction L-aspartyl-tRNA(Asn) + L-glutamine + ATP + H2O = L-asparaginyl-tRNA(Asn) + L-glutamate + ADP + phosphate + 2 H(+). Its function is as follows. Allows the formation of correctly charged Asn-tRNA(Asn) or Gln-tRNA(Gln) through the transamidation of misacylated Asp-tRNA(Asn) or Glu-tRNA(Gln) in organisms which lack either or both of asparaginyl-tRNA or glutaminyl-tRNA synthetases. The reaction takes place in the presence of glutamine and ATP through an activated phospho-Asp-tRNA(Asn) or phospho-Glu-tRNA(Gln). The sequence is that of Aspartyl/glutamyl-tRNA(Asn/Gln) amidotransferase subunit B from Mycolicibacterium smegmatis (strain ATCC 700084 / mc(2)155) (Mycobacterium smegmatis).